The chain runs to 284 residues: tRNA pseudouridine synthase A (284 aa).

Aspartate 62 (nucleophile) is an active-site residue. Tyrosine 123 is a substrate binding site.

The protein belongs to the tRNA pseudouridine synthase TruA family. In terms of assembly, homodimer.

The enzyme catalyses uridine(38/39/40) in tRNA = pseudouridine(38/39/40) in tRNA. Formation of pseudouridine at positions 38, 39 and 40 in the anticodon stem and loop of transfer RNAs. This is tRNA pseudouridine synthase A from Streptomyces griseus subsp. griseus (strain JCM 4626 / CBS 651.72 / NBRC 13350 / KCC S-0626 / ISP 5235).